The primary structure comprises 305 residues: Syntaxin-112 (305 aa).

Residue Met-1 is modified to N-acetylmethionine. Residues 52 to 119 (QEIETIKTLI…TLIETLEKRN (68 aa)) are a coiled coil. Residues 210–272 (DLKTKERHEA…SGGTNSLYYA (63 aa)) form the t-SNARE coiled-coil homology domain.

This sequence belongs to the syntaxin family. As to quaternary structure, part of the t-SNARE complex.

Functionally, vesicle trafficking protein that functions in the secretory pathway. This Arabidopsis thaliana (Mouse-ear cress) protein is Syntaxin-112 (SYP112).